Reading from the N-terminus, the 686-residue chain is tRNA 5-methylaminomethyl-2-thiouridine biosynthesis bifunctional protein MnmC (686 aa).

Residues 1 to 258 (MPNIPLRVNS…RRALRRQQLD (258 aa)) form a tRNA (mnm(5)s(2)U34)-methyltransferase region. An FAD-dependent cmnm(5)s(2)U34 oxidoreductase region spans residues 276–686 (IGGGVASANL…MRKLIKGKAL (411 aa)).

In the N-terminal section; belongs to the methyltransferase superfamily. tRNA (mnm(5)s(2)U34)-methyltransferase family. This sequence in the C-terminal section; belongs to the DAO family. FAD is required as a cofactor.

Its subcellular location is the cytoplasm. The enzyme catalyses 5-aminomethyl-2-thiouridine(34) in tRNA + S-adenosyl-L-methionine = 5-methylaminomethyl-2-thiouridine(34) in tRNA + S-adenosyl-L-homocysteine + H(+). Functionally, catalyzes the last two steps in the biosynthesis of 5-methylaminomethyl-2-thiouridine (mnm(5)s(2)U) at the wobble position (U34) in tRNA. Catalyzes the FAD-dependent demodification of cmnm(5)s(2)U34 to nm(5)s(2)U34, followed by the transfer of a methyl group from S-adenosyl-L-methionine to nm(5)s(2)U34, to form mnm(5)s(2)U34. The sequence is that of tRNA 5-methylaminomethyl-2-thiouridine biosynthesis bifunctional protein MnmC from Shewanella loihica (strain ATCC BAA-1088 / PV-4).